A 219-amino-acid chain; its full sequence is Uracil-DNA glycosylase (219 aa).

D61 serves as the catalytic Proton acceptor.

Belongs to the uracil-DNA glycosylase (UDG) superfamily. UNG family.

It is found in the cytoplasm. It carries out the reaction Hydrolyzes single-stranded DNA or mismatched double-stranded DNA and polynucleotides, releasing free uracil.. Its function is as follows. Excises uracil residues from the DNA which can arise as a result of misincorporation of dUMP residues by DNA polymerase or due to deamination of cytosine. In Neisseria meningitidis serogroup C (strain 053442), this protein is Uracil-DNA glycosylase.